The following is a 113-amino-acid chain: ATP-dependent Clp protease adapter protein ClpS (113 aa).

The protein belongs to the ClpS family. Binds to the N-terminal domain of the chaperone ClpA.

Involved in the modulation of the specificity of the ClpAP-mediated ATP-dependent protein degradation. In Leptospira biflexa serovar Patoc (strain Patoc 1 / Ames), this protein is ATP-dependent Clp protease adapter protein ClpS.